Here is an 859-residue protein sequence, read N- to C-terminus: Leucine--tRNA ligase (859 aa).

The 'HIGH' region signature appears at 42 to 52 (PYPSGKLHVGH). A 'KMSKS' region motif is present at residues 611–615 (KMSKS). Residue Lys614 coordinates ATP.

It belongs to the class-I aminoacyl-tRNA synthetase family.

Its subcellular location is the cytoplasm. It catalyses the reaction tRNA(Leu) + L-leucine + ATP = L-leucyl-tRNA(Leu) + AMP + diphosphate. The sequence is that of Leucine--tRNA ligase from Fusobacterium nucleatum subsp. nucleatum (strain ATCC 25586 / DSM 15643 / BCRC 10681 / CIP 101130 / JCM 8532 / KCTC 2640 / LMG 13131 / VPI 4355).